A 380-amino-acid polypeptide reads, in one-letter code: MKVEAFIPAVLLLCFGVMLCLKSSCALQIGNNNELKNYISWEDLRVVEDGRIERSFSIKENSNWVTTNANANANATNVRRVIVVDKNGGGDSVTVQGAVDMVPDSNSQRVKIFILPGIYREKVIVPKSKPYISFIGNESYAGDTVISWSDKASDLGCDGKELGTYRTASVSIESDFFCATAITFENTVVAEAGEQGRQAVALRIIGDKAVFYRVRVLGSQDTLFDDNGSHYFYQCYIQGNVDFIFGNAKSLYQDCDIHSTAKRYGAIAAHHRDSETEDTGFSFVNCDISGTGQIYLGRAWGNYSRTVYSNCFIADIITPVGWSDWKHPERQRKVMFGEYNCRGRGAERGGRVPWSKTLTRDEVKPFLGREFIYGDQWLRL.

The first 26 residues, 1–26 (MKVEAFIPAVLLLCFGVMLCLKSSCA), serve as a signal peptide directing secretion. Asparagine 74 and asparagine 137 each carry an N-linked (GlcNAc...) asparagine glycan. Positions 164 and 198 each coordinate substrate. The active-site Proton donor is aspartate 221. The N-linked (GlcNAc...) asparagine glycan is linked to asparagine 227. Cysteines 235 and 255 form a disulfide. The Nucleophile role is filled by aspartate 242. Arginine 298 and tryptophan 300 together coordinate substrate. The N-linked (GlcNAc...) asparagine glycan is linked to asparagine 302.

Belongs to the pectinesterase family. In terms of tissue distribution, expressed in flower buds, siliques, developing guard cells, floral nectares, at the stigmatic surface, in the hypocotyl-root transition zone and the area of lateral root emergence. Not expressed in mature leaves.

The protein localises to the secreted. Its subcellular location is the cell wall. It carries out the reaction [(1-&gt;4)-alpha-D-galacturonosyl methyl ester](n) + n H2O = [(1-&gt;4)-alpha-D-galacturonosyl](n) + n methanol + n H(+). The protein operates within glycan metabolism; pectin degradation; 2-dehydro-3-deoxy-D-gluconate from pectin: step 1/5. Functionally, pectinesterase required for cell type-specific pectin degradation to separate microspores. This chain is Pectinesterase QRT1, found in Arabidopsis thaliana (Mouse-ear cress).